The following is a 193-amino-acid chain: Major structural subunit of bundle-forming pilus (193 aa).

Residues 1 to 13 constitute a propeptide that is removed on maturation; the sequence is MVSKIMNKKYEKG. Leu-14 carries the N-methylleucine modification. The chain crosses the membrane as a helical span at residues 14 to 35; the sequence is LSLIESAMVLALAATVTAGVMF. Residues Cys-129 and Cys-179 are joined by a disulfide bond.

The protein belongs to the N-Me-Phe pilin family. As to quaternary structure, 10 to 100 laterally aligned filaments or bundle-forming pili coalesce into rope-like bundles. These form linkages between the bacteria within the enteropathogenic E.coli (EPEC) microcolonies that are attached to epithelial cells.

The protein localises to the fimbrium. Its subcellular location is the membrane. Its function is as follows. Major repeating bundle-forming pilus (BFP) subunit. Is required for EPEC localized adherence. This Escherichia coli O111:H- protein is Major structural subunit of bundle-forming pilus (bfpA).